Here is a 287-residue protein sequence, read N- to C-terminus: 2-dehydro-3-deoxyphosphooctonate aldolase (287 aa).

It belongs to the KdsA family.

Its subcellular location is the cytoplasm. It carries out the reaction D-arabinose 5-phosphate + phosphoenolpyruvate + H2O = 3-deoxy-alpha-D-manno-2-octulosonate-8-phosphate + phosphate. Its pathway is carbohydrate biosynthesis; 3-deoxy-D-manno-octulosonate biosynthesis; 3-deoxy-D-manno-octulosonate from D-ribulose 5-phosphate: step 2/3. The protein operates within bacterial outer membrane biogenesis; lipopolysaccharide biosynthesis. The sequence is that of 2-dehydro-3-deoxyphosphooctonate aldolase from Rhodopseudomonas palustris (strain HaA2).